The following is a 2471-amino-acid chain: Histidine protein kinase 1 (2471 aa).

Residues 1–10 (MSMNFFNSSE) are compositionally biased toward polar residues. Disordered stretches follow at residues 1–30 (MSMN…TEHY), 52–75 (ETKK…VPPS), and 395–415 (RQGS…FNIG). A compositionally biased stretch (basic and acidic residues) spans 11–30 (PARDHKPDQEKETVMTTEHY). The region spanning 358 to 636 (EHPSQSTDQK…DCHSLLHDLI (279 aa)) is the Protein kinase domain. The 222-residue stretch at 2004-2225 (NMSHEIRTPF…TFYVSVIMDA (222 aa)) folds into the Histidine kinase domain. H2007 bears the Phosphohistidine; by autocatalysis mark. Positions 2340 to 2466 (RILLAEDNLL…ELRRILTKVG (127 aa)) constitute a Response regulatory domain. D2394 bears the 4-aspartylphosphate mark.

Post-translationally, the phosphorelay mechanism involves the sequential transfer of a phosphate group from His-2007 (H1) in the histidine kinase domain (transmitter domain) to Asp-2394 (D1) of the response regulatory domain (receiver domain). This transfer probably occurs between two CHK1 molecules, rather than intramolecularly.

The enzyme catalyses ATP + protein L-histidine = ADP + protein N-phospho-L-histidine.. Functionally, histidine kinase involved in a two-component signaling pathway that regulates cell wall mannan and glucan biosynthesis. Regulates quorum sensing as well as hyphal formation, biofilm formation, chlamidospore formation, and virulence. Plays a prominent role in phagocyte activation. Involved in the covering of the most potent pro-inflammatory cell wall molecules, the beta-glucans, underneath a dense mannan layer, so that the pathogen becomes partly invisible for immune cells such as phagocytes. The chain is Histidine protein kinase 1 (CHK1) from Candida albicans (strain SC5314 / ATCC MYA-2876) (Yeast).